Here is a 235-residue protein sequence, read N- to C-terminus: Large ribosomal subunit protein uL1 (235 aa).

This sequence belongs to the universal ribosomal protein uL1 family. Part of the 50S ribosomal subunit.

Binds directly to 23S rRNA. The L1 stalk is quite mobile in the ribosome, and is involved in E site tRNA release. Functionally, protein L1 is also a translational repressor protein, it controls the translation of the L11 operon by binding to its mRNA. This Nitratidesulfovibrio vulgaris (strain ATCC 29579 / DSM 644 / CCUG 34227 / NCIMB 8303 / VKM B-1760 / Hildenborough) (Desulfovibrio vulgaris) protein is Large ribosomal subunit protein uL1.